Here is a 204-residue protein sequence, read N- to C-terminus: 8-oxoguanine DNA glycosylase/AP lyase (204 aa).

Residues lysine 129 and aspartate 147 contribute to the active site.

This sequence belongs to the type-2 OGG1 family.

The enzyme catalyses 2'-deoxyribonucleotide-(2'-deoxyribose 5'-phosphate)-2'-deoxyribonucleotide-DNA = a 3'-end 2'-deoxyribonucleotide-(2,3-dehydro-2,3-deoxyribose 5'-phosphate)-DNA + a 5'-end 5'-phospho-2'-deoxyribonucleoside-DNA + H(+). In terms of biological role, catalyzes the excision of an oxidatively damaged form of guanine (7,8-dihydro-8-oxoguanine = 8-oxoG) from DNA. Also cleaves the DNA backbone at apurinic/apyrimidinic sites (AP sites). The sequence is that of 8-oxoguanine DNA glycosylase/AP lyase from Thermoplasma acidophilum (strain ATCC 25905 / DSM 1728 / JCM 9062 / NBRC 15155 / AMRC-C165).